A 239-amino-acid polypeptide reads, in one-letter code: Probable transcriptional regulatory protein LMOf2365_0385 (239 aa).

This sequence belongs to the TACO1 family. YeeN subfamily.

The protein localises to the cytoplasm. This Listeria monocytogenes serotype 4b (strain F2365) protein is Probable transcriptional regulatory protein LMOf2365_0385.